Reading from the N-terminus, the 267-residue chain is Ribosomal RNA small subunit methyltransferase J (267 aa).

Residues 133–134 and Asp187 each bind S-adenosyl-L-methionine; that span reads ER.

It belongs to the methyltransferase superfamily. RsmJ family.

Its subcellular location is the cytoplasm. It carries out the reaction guanosine(1516) in 16S rRNA + S-adenosyl-L-methionine = N(2)-methylguanosine(1516) in 16S rRNA + S-adenosyl-L-homocysteine + H(+). Functionally, specifically methylates the guanosine in position 1516 of 16S rRNA. This is Ribosomal RNA small subunit methyltransferase J from Halorhodospira halophila (strain DSM 244 / SL1) (Ectothiorhodospira halophila (strain DSM 244 / SL1)).